A 421-amino-acid polypeptide reads, in one-letter code: ATP-dependent RNA helicase RhlB (421 aa).

Residues glutamine 9 to alanine 37 carry the Q motif motif. The Helicase ATP-binding domain maps to leucine 40–valine 219. Alanine 53–threonine 60 serves as a coordination point for ATP. The DEAD box motif lies at aspartate 165–aspartate 168. The Helicase C-terminal domain occupies arginine 245–leucine 390. The interval leucine 390–glycine 421 is disordered. Residues glycine 405–proline 414 are compositionally biased toward low complexity.

Belongs to the DEAD box helicase family. RhlB subfamily. Component of the RNA degradosome, which is a multiprotein complex involved in RNA processing and mRNA degradation.

The protein resides in the cytoplasm. The catalysed reaction is ATP + H2O = ADP + phosphate + H(+). DEAD-box RNA helicase involved in RNA degradation. Has RNA-dependent ATPase activity and unwinds double-stranded RNA. This chain is ATP-dependent RNA helicase RhlB, found in Cronobacter sakazakii (strain ATCC BAA-894) (Enterobacter sakazakii).